The following is a 1225-amino-acid chain: ABC transporter B family member 18 (1225 aa).

A run of 6 helical transmembrane segments spans residues 23–43 (MALGLIGAVGDGFITPIIFFI), 70–90 (VALVYVACASWVICFIEGYCW), 146–168 (LPNFLMNTSAFVASYIVGFLLLW), 172–194 (IVGFPFIILLLIPGLMYGRALIR), 252–272 (GIAIGSNGITYAIWGFLTWYG), and 284–304 (GTVSSVIVCVTFGGTSLGQSL). The ABC transmembrane type-1 1 domain maps to 23 to 312 (MALGLIGAVG…SLSNLKYFSE (290 aa)). The ABC transporter 1 domain maps to 347–583 (VEFNHVKFTY…LDGQYTSLVR (237 aa)). An ATP-binding site is contributed by 382–389 (GGSGSGKS). N530 is a glycosylation site (N-linked (GlcNAc...) asparagine). Helical transmembrane passes span 657–677 (ALYGCLGAALFGAVQPIYSYS) and 699–719 (IYVLLFVGLALFTFLSNISQH). One can recognise an ABC transmembrane type-1 2 domain in the interval 657–945 (ALYGCLGAAL…AGTMTKDLVK (289 aa)). The N-linked (GlcNAc...) asparagine glycan is linked to N754. The next 4 helical transmembrane spans lie at 780–800 (LLVQTISAVSITCAIGLVISW), 804–824 (IVMMSVQPVIVVCFYTQRVLL), 880–900 (SWLAGIMLGTSQSLITCVSAL), and 919–939 (FLEIFLIFASTGRVIAEAGTM). N-linked (GlcNAc...) asparagine glycosylation is found at N960 and N1000. Positions 980–1218 (ISFSNVDFAY…GPKGAYFSLV (239 aa)) constitute an ABC transporter 2 domain. 1015–1022 (GPSGSGKS) serves as a coordination point for ATP. N-linked (GlcNAc...) asparagine glycosylation is present at N1201.

The protein belongs to the ABC transporter superfamily. ABCB family. Multidrug resistance exporter (TC 3.A.1.201) subfamily.

The protein localises to the membrane. The sequence is that of ABC transporter B family member 18 (ABCB18) from Arabidopsis thaliana (Mouse-ear cress).